Consider the following 36-residue polypeptide: Photosystem II reaction center protein X (36 aa).

The helical transmembrane segment at 9–29 (LWSIFWGGVVVALGAAALTAI) threads the bilayer.

It belongs to the PsbX family. Type 1 subfamily. PSII is composed of 1 copy each of membrane proteins PsbA, PsbB, PsbC, PsbD, PsbE, PsbF, PsbH, PsbI, PsbJ, PsbK, PsbL, PsbM, PsbT, PsbX, Psb30/Ycf12, peripheral proteins PsbO, CyanoQ (PsbQ), PsbU, PsbV and a large number of cofactors. It forms dimeric complexes.

It localises to the cell inner membrane. Involved in the binding and/or turnover of quinones at the Q(B) site of photosystem II (PSII). PSII is a light-driven water plastoquinone oxidoreductase, using light energy to abstract electrons from H(2)O, generating a proton gradient subsequently used for ATP formation. This Gloeobacter violaceus (strain ATCC 29082 / PCC 7421) protein is Photosystem II reaction center protein X.